The sequence spans 379 residues: MSVRTLPLLFLNLGGEMLYVLDQRLRAQNIPGDKARKVLNDIISTMFNRKFMDELFKPQELYSKKALRTVYDRLAHASIMRLNQASMDKLYDLMTMAFKYQVLLCPRPKDVLLVTFNHLDAIKGFVQDSPTVIHQVDETFRQLSEVYGKLSEGEFQLIRQTLLNFFQDLHIRVSTFLKDKVQNSNGRFVLPVSGPVPWGTEVPGVIRVFSVKGKEVKKMKFRHGGDYVAAQKEGSFELYGDRVLKLGTNMYSASRPVETHMSATSKNAASRAQENIVPNPLAKEELNFLARLMGGMEIKKPSGPEPGFRLNLFTTDEEEEHAALSRPEELSYEVISIQATQDQQRNEELARIMGEFEITEQLEQNTSKGDDLLAMMDRL.

Predominantly expressed in testis.

Its subcellular location is the basal cell membrane. Its function is as follows. May be involved in drug clearance in the placenta. This Mus musculus (Mouse) protein is Protein OSCP1 (Oscp1).